A 384-amino-acid polypeptide reads, in one-letter code: MMKTKYLLLPLLASSSLLSHMAFANNHWPDLPIGVKNGVSAQIGSKVYVGLGSAEKSFYVLDTQAPQNGWTLLAEFIGPERSGATATVVGENIFVFGGSGKASDDASSPIIFDTVYRFDTQTNRWHQVKTQTPVGLLGASSYSPDGKQVLFFGGYSKPLFDKYLADITRTDKKAQPEQWQKIVDDYMGMEPLAYQWNRDVLSFNPTNDKWDVVTRSPYLPNCGSATVIDGPSITLISGEIKPGLRTAEVKTFTYGELQPWQSTYALPAAKGQAQQEGIAGAYSGVVSNTLLVAGGANFHGAKAQFESGQMFAHNGLSKAYNSEIYAKQKGVWQQVGQLPEGLAYGASFSVKGGVLMVGGERADRTASTKVYLVGLNNNQIDIVD.

Residues M1–A24 form the signal peptide. Kelch repeat units lie at residues K46–G90, N92–D145, K147–D184, D185–G230, I233–A281, A303–G352, and V354–V383. E239 (proton acceptor) is an active-site residue.

This sequence belongs to the NanM family. In terms of assembly, homodimer.

The protein localises to the periplasm. It carries out the reaction N-acetyl-alpha-neuraminate = N-acetyl-beta-neuraminate. Converts alpha-N-acetylneuranimic acid (Neu5Ac) to the beta-anomer, accelerating the equilibrium between the alpha- and beta-anomers. Probably facilitates sialidase-negative bacteria to compete successfully for limited amounts of extracellular Neu5Ac, which is likely taken up in the beta-anomer. In addition, the rapid removal of sialic acid from solution might be advantageous to the bacterium to damp down host responses. The polypeptide is N-acetylneuraminate epimerase (Vibrio vulnificus (strain YJ016)).